The primary structure comprises 195 residues: Elongation factor P (195 aa).

Belongs to the elongation factor P family.

It localises to the cytoplasm. It participates in protein biosynthesis; polypeptide chain elongation. Functionally, involved in peptide bond synthesis. Stimulates efficient translation and peptide-bond synthesis on native or reconstituted 70S ribosomes in vitro. Probably functions indirectly by altering the affinity of the ribosome for aminoacyl-tRNA, thus increasing their reactivity as acceptors for peptidyl transferase. The polypeptide is Elongation factor P (Rhodopirellula baltica (strain DSM 10527 / NCIMB 13988 / SH1)).